The chain runs to 258 residues: Hydroxyacylglutathione hydrolase (258 aa).

Residues histidine 56, histidine 58, aspartate 60, histidine 61, histidine 112, aspartate 132, and histidine 170 each coordinate Zn(2+).

The protein belongs to the metallo-beta-lactamase superfamily. Glyoxalase II family. In terms of assembly, monomer. Requires Zn(2+) as cofactor.

It catalyses the reaction an S-(2-hydroxyacyl)glutathione + H2O = a 2-hydroxy carboxylate + glutathione + H(+). It participates in secondary metabolite metabolism; methylglyoxal degradation; (R)-lactate from methylglyoxal: step 2/2. In terms of biological role, thiolesterase that catalyzes the hydrolysis of S-D-lactoyl-glutathione to form glutathione and D-lactic acid. This Pseudomonas paraeruginosa (strain DSM 24068 / PA7) (Pseudomonas aeruginosa (strain PA7)) protein is Hydroxyacylglutathione hydrolase.